Consider the following 380-residue polypeptide: Ubiquitin-like protein 7 (380 aa).

Positions 18 to 98 constitute a Ubiquitin-like domain; that stretch reads APKSILQLPE…VLRKSWPEPD (81 aa). Residues 200-313 form a disordered region; that stretch reads TPMPGADSSS…SSGVQSGTPI (114 aa). The span at 206 to 221 shows a compositional bias: low complexity; sequence DSSSRSMPSSSYRDMP. S230 is modified (phosphoserine). Low complexity-rich tracts occupy residues 239 to 253 and 270 to 293; these read STRS…SSRP and SELA…TPGT. The segment covering 294-313 has biased composition (polar residues); the sequence is QGHSSGTSPMSSGVQSGTPI. The region spanning 333-377 is the UBA domain; the sequence is SLQIQWQPQLQQLRDMGIQDDELSLRALQATGGDIQAALELIFAG.

Binds ubiquitin. Interacts with MAVS; this interaction enhances TRIM21-dependent 'Lys-27'-linked polyubiquitination of MAVS. Post-translationally, deubiquitinated by OTUD4 which stabilizes UBL7 expression.

Interferon-stimulated protein that positively regulates RNA virus-triggered innate immune signaling. Mechanistically, promotes 'Lys-27'-linked polyubiquitination of MAVS through TRIM21 leading to enhanced the IFN signaling pathway. This is Ubiquitin-like protein 7 (Ubl7) from Mus musculus (Mouse).